Consider the following 178-residue polypeptide: Protein-export protein SecB (178 aa).

Acidic residues predominate over residues 1-13 (MADEGDVLTDLDM). Residues 1-25 (MADEGDVLTDLDMDPAAGGNGADNR) form a disordered region.

The protein belongs to the SecB family. In terms of assembly, homotetramer, a dimer of dimers. One homotetramer interacts with 1 SecA dimer.

It localises to the cytoplasm. In terms of biological role, one of the proteins required for the normal export of preproteins out of the cell cytoplasm. It is a molecular chaperone that binds to a subset of precursor proteins, maintaining them in a translocation-competent state. It also specifically binds to its receptor SecA. The polypeptide is Protein-export protein SecB (Erythrobacter litoralis (strain HTCC2594)).